We begin with the raw amino-acid sequence, 1074 residues long: Carbamoyl phosphate synthase large chain (1074 aa).

Residues 1-399 (MPKRSDIKKV…ALMKAIRSLD (399 aa)) are carboxyphosphate synthetic domain. Positions 129, 169, 175, 176, 208, 210, 215, 241, 242, 243, 284, and 296 each coordinate ATP. Residues 133 to 325 (KKAMERIGEP…IARVTAKIAI (193 aa)) form the ATP-grasp 1 domain. 3 residues coordinate Mg(2+): Q284, E296, and N298. Q284, E296, and N298 together coordinate Mn(2+). An oligomerization domain region spans residues 400-543 (IDIDLGYNGK…YSTYDEECEL (144 aa)). The carbamoyl phosphate synthetic domain stretch occupies residues 544-933 (NPSDNKKVLI…FKAEMSAENN (390 aa)). In terms of domain architecture, ATP-grasp 2 spans 674–865 (NKLLNKLGIP…LAKIAAKVMA (192 aa)). ATP-binding residues include R710, D749, L751, E756, G781, I782, H783, S784, Q824, and E836. Mg(2+) is bound by residues Q824, E836, and N838. The Mn(2+) site is built by Q824, E836, and N838. Positions 932–1074 (NNLPLDGIVF…YHREVRYRAL (143 aa)) constitute an MGS-like domain. An allosteric domain region spans residues 934-1074 (LPLDGIVFIS…YHREVRYRAL (141 aa)).

It belongs to the CarB family. Composed of two chains; the small (or glutamine) chain promotes the hydrolysis of glutamine to ammonia, which is used by the large (or ammonia) chain to synthesize carbamoyl phosphate. Tetramer of heterodimers (alpha,beta)4. The cofactor is Mg(2+). It depends on Mn(2+) as a cofactor.

The catalysed reaction is hydrogencarbonate + L-glutamine + 2 ATP + H2O = carbamoyl phosphate + L-glutamate + 2 ADP + phosphate + 2 H(+). It catalyses the reaction hydrogencarbonate + NH4(+) + 2 ATP = carbamoyl phosphate + 2 ADP + phosphate + 2 H(+). It participates in amino-acid biosynthesis; L-arginine biosynthesis; carbamoyl phosphate from bicarbonate: step 1/1. It functions in the pathway pyrimidine metabolism; UMP biosynthesis via de novo pathway; (S)-dihydroorotate from bicarbonate: step 1/3. Its function is as follows. Large subunit of the glutamine-dependent carbamoyl phosphate synthetase (CPSase). CPSase catalyzes the formation of carbamoyl phosphate from the ammonia moiety of glutamine, carbonate, and phosphate donated by ATP, constituting the first step of 2 biosynthetic pathways, one leading to arginine and/or urea and the other to pyrimidine nucleotides. The large subunit (synthetase) binds the substrates ammonia (free or transferred from glutamine from the small subunit), hydrogencarbonate and ATP and carries out an ATP-coupled ligase reaction, activating hydrogencarbonate by forming carboxy phosphate which reacts with ammonia to form carbamoyl phosphate. The sequence is that of Carbamoyl phosphate synthase large chain from Methanothrix thermoacetophila (strain DSM 6194 / JCM 14653 / NBRC 101360 / PT) (Methanosaeta thermophila).